The primary structure comprises 441 residues: uncharacterized protein (441 aa).

The next 11 helical transmembrane spans lie at 68–88 (MAIA…GPFA), 110–130 (ALIA…PLLV), 131–151 (GALV…AALP), 164–184 (SVAI…MLLP), 194–214 (GASA…LWSL), 229–246 (AIHG…LHGA), 260–280 (SGLA…LLLV), 287–307 (AVGG…GAFL), 337–357 (VAAA…LGVA), 384–404 (VQDA…AALI), and 412–432 (VFVL…TIVG).

Belongs to the major facilitator superfamily.

The protein localises to the cell membrane. This is an uncharacterized protein from Mycobacterium tuberculosis (strain ATCC 25618 / H37Rv).